The sequence spans 379 residues: Odorant receptor 33b (379 aa).

The Cytoplasmic segment spans residues 1–37 (MDLKPRVIRSEDIYRTYWLYWHLLGLESNFFLNRLLD). The chain crosses the membrane as a helical span at residues 38–58 (LVITIFVTIWYPIHLILGLFM). Topologically, residues 59–64 (ERSLGD) are extracellular. A helical transmembrane segment spans residues 65-85 (VCKGLPITAACFFASFKFICF). At 86 to 129 (RFKLSEIKEIEILFKELDQRALSREECEFFNQNTRREANFIWKS) the chain is on the cytoplasmic side. The chain crosses the membrane as a helical span at residues 130–150 (FIVAYGLSNISAIASVLFGGG). The Extracellular portion of the chain corresponds to 151–165 (HKLLYPAWFPYDVQA). The chain crosses the membrane as a helical span at residues 166–186 (TELIFWLSVTYQIAGVSLAIL). Residues 187-256 (QNLANDSYPP…LLRSTMNISQ (70 aa)) are Cytoplasmic-facing. A helical transmembrane segment spans residues 257–277 (LGQFISSGVNISITLVNILFF). The Extracellular segment spans residues 278–281 (ADNN). The chain crosses the membrane as a helical span at residues 282 to 302 (FAITYYGVYFLSMVLELFPCC). Residues 303 to 355 (YYGTLISVEMNQLTYAIYSSNWMSMNRSYSRILLIFMQLTLAEVQIKAGGMIG) are Cytoplasmic-facing. Residues 356–376 (IGMNAFFATVRLAYSFFTLAM) form a helical membrane-spanning segment. Residues 377–379 (SLR) lie on the Extracellular side of the membrane.

This sequence belongs to the insect chemoreceptor superfamily. Heteromeric odorant receptor channel (TC 1.A.69) family. Or2a subfamily. As to quaternary structure, interacts with Orco. Complexes exist early in the endomembrane system in olfactory sensory neurons (OSNs), coupling these complexes to the conserved ciliary trafficking pathway. Expressed in 15 cells in the antenna but not the maxillary palp.

It is found in the cell membrane. Odorant receptor which mediates acceptance or avoidance behavior, depending on its substrates. The odorant receptor repertoire encodes a large collection of odor stimuli that vary widely in identity, intensity, and duration. May form a complex with Orco to form odorant-sensing units, providing sensitive and prolonged odorant signaling and calcium permeability. Involved in the behavioral responses to pentyl acetate and pyrazines. In Drosophila melanogaster (Fruit fly), this protein is Odorant receptor 33b (Or33b).